A 232-amino-acid chain; its full sequence is MLKLTDITWLYHHLPMRFSLTVERGEQVAILGPSGAGKSTLLNLIAGFLTPASGSLTIDGVDHTTMPPSRRPVSMLFQENNLFSHLTVAQNIGLGLNPGLKLNAVQQGKMHAIARQMGIDNLMARLPGELSGGQRQRVALARCLVREQPILLLDEPFSALDPALRQEMLTLVSTSCQQQKMTLLMVSHSVEDAARIATRSVVVADGRIAWQGMTNELLSGKASASALLGITG.

An ABC transporter domain is found at 2-230; the sequence is LKLTDITWLY…KASASALLGI (229 aa). 32-39 lines the ATP pocket; that stretch reads GPSGAGKS.

The protein belongs to the ABC transporter superfamily. Thiamine importer (TC 3.A.1.19.1) family. As to quaternary structure, the complex is composed of two ATP-binding proteins (ThiQ), two transmembrane proteins (ThiP) and a solute-binding protein (ThiB).

It localises to the cell inner membrane. It catalyses the reaction thiamine(out) + ATP + H2O = thiamine(in) + ADP + phosphate + H(+). Its function is as follows. Part of the ABC transporter complex ThiBPQ involved in thiamine import. Responsible for energy coupling to the transport system. This chain is Thiamine import ATP-binding protein ThiQ, found in Escherichia coli (strain K12).